The following is a 130-amino-acid chain: Small ribosomal subunit protein uS9 (130 aa).

It belongs to the universal ribosomal protein uS9 family.

This Albidiferax ferrireducens (strain ATCC BAA-621 / DSM 15236 / T118) (Rhodoferax ferrireducens) protein is Small ribosomal subunit protein uS9.